A 154-amino-acid polypeptide reads, in one-letter code: Ribosome maturation factor RimP (154 aa).

It belongs to the RimP family.

It localises to the cytoplasm. In terms of biological role, required for maturation of 30S ribosomal subunits. This is Ribosome maturation factor RimP from Heliobacterium modesticaldum (strain ATCC 51547 / Ice1).